The sequence spans 290 residues: Pyridoxal kinase PdxY (290 aa).

Residues Ser-12 and 47–48 (TQ) contribute to the substrate site. ATP is bound by residues Asp-114, Glu-151, Lys-184, and 211–214 (RPLL). Asp-225 contacts substrate.

Belongs to the pyridoxine kinase family. PdxY subfamily. In terms of assembly, homodimer. Mg(2+) serves as cofactor.

It catalyses the reaction pyridoxal + ATP = pyridoxal 5'-phosphate + ADP + H(+). The protein operates within cofactor metabolism; pyridoxal 5'-phosphate salvage; pyridoxal 5'-phosphate from pyridoxal: step 1/1. In terms of biological role, pyridoxal kinase involved in the salvage pathway of pyridoxal 5'-phosphate (PLP). Catalyzes the phosphorylation of pyridoxal to PLP. The polypeptide is Pyridoxal kinase PdxY (Pseudomonas putida (strain GB-1)).